Reading from the N-terminus, the 483-residue chain is ATP synthase subunit beta (483 aa).

168–175 lines the ATP pocket; that stretch reads GGAGVGKT.

Belongs to the ATPase alpha/beta chains family. In terms of assembly, F-type ATPases have 2 components, CF(1) - the catalytic core - and CF(0) - the membrane proton channel. CF(1) has five subunits: alpha(3), beta(3), gamma(1), delta(1), epsilon(1). CF(0) has three main subunits: a(1), b(2) and c(9-12). The alpha and beta chains form an alternating ring which encloses part of the gamma chain. CF(1) is attached to CF(0) by a central stalk formed by the gamma and epsilon chains, while a peripheral stalk is formed by the delta and b chains.

The protein localises to the cell membrane. It carries out the reaction ATP + H2O + 4 H(+)(in) = ADP + phosphate + 5 H(+)(out). In terms of biological role, produces ATP from ADP in the presence of a proton gradient across the membrane. The catalytic sites are hosted primarily by the beta subunits. This Mycobacterium ulcerans (strain Agy99) protein is ATP synthase subunit beta.